A 73-amino-acid chain; its full sequence is Putative membrane protein insertion efficiency factor (73 aa).

This sequence belongs to the UPF0161 family.

The protein resides in the cell inner membrane. Functionally, could be involved in insertion of integral membrane proteins into the membrane. This is Putative membrane protein insertion efficiency factor from Bacteroides fragilis (strain ATCC 25285 / DSM 2151 / CCUG 4856 / JCM 11019 / LMG 10263 / NCTC 9343 / Onslow / VPI 2553 / EN-2).